The following is a 668-amino-acid chain: DNA-directed RNA polymerase subunit beta' (668 aa).

The Zn(2+) site is built by C71, C73, C91, and C94. The Mg(2+) site is built by D505, D507, and D509.

The protein belongs to the RNA polymerase beta' chain family. RpoC1 subfamily. In plastids the minimal PEP RNA polymerase catalytic core is composed of four subunits: alpha, beta, beta', and beta''. When a (nuclear-encoded) sigma factor is associated with the core the holoenzyme is formed, which can initiate transcription. Mg(2+) serves as cofactor. Zn(2+) is required as a cofactor.

It localises to the plastid. Its subcellular location is the chloroplast. It carries out the reaction RNA(n) + a ribonucleoside 5'-triphosphate = RNA(n+1) + diphosphate. In terms of biological role, DNA-dependent RNA polymerase catalyzes the transcription of DNA into RNA using the four ribonucleoside triphosphates as substrates. In Mesostigma viride (Green alga), this protein is DNA-directed RNA polymerase subunit beta'.